The following is a 342-amino-acid chain: L-threonine 3-dehydrogenase (342 aa).

C38 is a Zn(2+) binding site. Residues T40 and H43 each act as charge relay system in the active site. Positions 63, 64, 93, 96, 99, and 107 each coordinate Zn(2+). Residues I175, D195, R200, 262–264 (LGL), and 286–287 (IY) contribute to the NAD(+) site.

This sequence belongs to the zinc-containing alcohol dehydrogenase family. Homotetramer. Zn(2+) serves as cofactor.

It is found in the cytoplasm. The enzyme catalyses L-threonine + NAD(+) = (2S)-2-amino-3-oxobutanoate + NADH + H(+). It participates in amino-acid degradation; L-threonine degradation via oxydo-reductase pathway; glycine from L-threonine: step 1/2. In terms of biological role, catalyzes the NAD(+)-dependent oxidation of L-threonine to 2-amino-3-ketobutyrate. The sequence is that of L-threonine 3-dehydrogenase from Streptomyces coelicolor (strain ATCC BAA-471 / A3(2) / M145).